The following is a 175-amino-acid chain: Hypoxanthine-guanine phosphoribosyltransferase (175 aa).

Residues Lys40 and Gly41 each contribute to the diphosphate site. 2 residues coordinate Mg(2+): Glu96 and Asp97. Residue Asp100 is the Proton acceptor of the active site. GMP contacts are provided by residues Lys128, 149–150, and Asp156; that span reads FL. A diphosphate-binding site is contributed by Arg162.

The protein belongs to the purine/pyrimidine phosphoribosyltransferase family. Requires Mg(2+) as cofactor.

It localises to the cytoplasm. It carries out the reaction IMP + diphosphate = hypoxanthine + 5-phospho-alpha-D-ribose 1-diphosphate. The catalysed reaction is GMP + diphosphate = guanine + 5-phospho-alpha-D-ribose 1-diphosphate. The protein operates within purine metabolism; IMP biosynthesis via salvage pathway; IMP from hypoxanthine: step 1/1. Its pathway is purine metabolism; GMP biosynthesis via salvage pathway; GMP from guanine: step 1/1. Purine salvage pathway enzyme that catalyzes the transfer of the ribosyl-5-phosphate group from 5-phospho-alpha-D-ribose 1-diphosphate (PRPP) to the N9 position of the 6-oxopurines hypoxanthine and guanine to form the corresponding ribonucleotides IMP (inosine 5'-monophosphate) and GMP (guanosine 5'-monophosphate), with the release of PPi. This is Hypoxanthine-guanine phosphoribosyltransferase (hpt) from Mycoplasma genitalium (strain ATCC 33530 / DSM 19775 / NCTC 10195 / G37) (Mycoplasmoides genitalium).